Consider the following 426-residue polypeptide: Putative phosphate permease CPn_0680/CP_0067/CPj0680/CpB0707 (426 aa).

11 helical membrane passes run 1-21 (MLPL…NIGA), 42-62 (AVVI…DRVA), 87-107 (TAAL…GWPV), 112-132 (SIVG…IIYW), 137-157 (IILI…YLIF), 180-200 (FLAA…GVIL), 207-227 (WAVS…FYYV), 260-280 (LVVE…MAFA), 313-333 (LMAF…WRVI), 364-384 (ILGL…GIGL), and 399-419 (IVLS…LFFF).

This sequence belongs to the inorganic phosphate transporter (PiT) (TC 2.A.20) family.

Its subcellular location is the cell membrane. Functionally, potential transporter for phosphate. In Chlamydia pneumoniae (Chlamydophila pneumoniae), this protein is Putative phosphate permease CPn_0680/CP_0067/CPj0680/CpB0707.